The sequence spans 259 residues: Snake venom serine protease homolog rhinocerase 3 (259 aa).

The signal sequence occupies residues 1–17 (VLIRVLANLLLLQLSYA). Residues 18 to 23 (QESSEL) constitute a propeptide that is removed on maturation. The region spanning 24 to 250 (VIGGDECDIN…YTDWIEGIIA (227 aa)) is the Peptidase S1 domain. Intrachain disulfides connect Cys30–Cys164, Cys51–Cys67, Cys99–Cys257, Cys143–Cys211, Cys175–Cys190, and Cys201–Cys226. An N-linked (GlcNAc...) asparagine glycan is attached at Asn80. Asn252 carries an N-linked (GlcNAc...) asparagine glycan.

It belongs to the peptidase S1 family. Snake venom subfamily. In terms of tissue distribution, expressed by the venom gland.

It localises to the secreted. Its function is as follows. Snake venom serine protease homolog that may act in the hemostasis system of the prey. The chain is Snake venom serine protease homolog rhinocerase 3 from Bitis rhinoceros (West African gaboon viper).